A 955-amino-acid polypeptide reads, in one-letter code: Protein translocase subunit SecA (955 aa).

Residues Gln87, 105–109 (GEGKT), and Asp494 each bind ATP. The segment at 861 to 955 (AAPAPAAPRP…KKAPRTKRKR (95 aa)) is disordered. Positions 874 to 888 (QEAAQQAQGTAAPSA) are enriched in low complexity. The span at 943 to 955 (SKGKKAPRTKRKR) shows a compositional bias: basic residues.

Belongs to the SecA family. Monomer and homodimer. Part of the essential Sec protein translocation apparatus which comprises SecA, SecYEG and auxiliary proteins SecDF. Other proteins may also be involved.

It is found in the cell membrane. Its subcellular location is the cytoplasm. The enzyme catalyses ATP + H2O + cellular proteinSide 1 = ADP + phosphate + cellular proteinSide 2.. Part of the Sec protein translocase complex. Interacts with the SecYEG preprotein conducting channel. Has a central role in coupling the hydrolysis of ATP to the transfer of proteins into and across the cell membrane, serving as an ATP-driven molecular motor driving the stepwise translocation of polypeptide chains across the membrane. In Rhodococcus opacus (strain B4), this protein is Protein translocase subunit SecA.